A 460-amino-acid chain; its full sequence is MATGKIVQVIGAVVDVEFPQDAVPQVYSALEVKNGDARLVLEVQQQLGGGVVRTIAMGSSDGLKRGLETVDLQHPIEVPVGTATLGRIMNVLGEPIDMKGDIGEEERWAIHRSAPSYEDQSNSQDLLETGIKVIDLMCPFAKGGKVGLFGGAGVGKTVNMMELIRNIAAEHSGFSVFAGVGERTREGNDFYHEMTDSNVIDKVSLVYGQMNEPPGNRLRVALTGLTMAEKFRDEGRDVLLFIDNIYRYTLAGTEVSALLGRMPSAVGYQPTLAEEMGVLQERITSTKTGSITSVQAVYVPADDLTDPSPATTFAHLDATVVLSRQIASLGIYPAVDPLDSTSRQLDPLVVGQEHYDTARGVQSLLQRYQELKDIIAILGMDELSEEDKLVVARSRKMQRFLSQPFFVAEVFTGSPGKYVSLKDTIRGFKGIMDGEFDHLPEQAFYMVGSIEEAVEKAKKL.

Residue 150–157 (GGAGVGKT) coordinates ATP.

It belongs to the ATPase alpha/beta chains family. F-type ATPases have 2 components, CF(1) - the catalytic core - and CF(0) - the membrane proton channel. CF(1) has five subunits: alpha(3), beta(3), gamma(1), delta(1), epsilon(1). CF(0) has three main subunits: a(1), b(2) and c(9-12). The alpha and beta chains form an alternating ring which encloses part of the gamma chain. CF(1) is attached to CF(0) by a central stalk formed by the gamma and epsilon chains, while a peripheral stalk is formed by the delta and b chains.

The protein resides in the cell inner membrane. The catalysed reaction is ATP + H2O + 4 H(+)(in) = ADP + phosphate + 5 H(+)(out). Functionally, produces ATP from ADP in the presence of a proton gradient across the membrane. The catalytic sites are hosted primarily by the beta subunits. This chain is ATP synthase subunit beta, found in Erwinia tasmaniensis (strain DSM 17950 / CFBP 7177 / CIP 109463 / NCPPB 4357 / Et1/99).